Reading from the N-terminus, the 332-residue chain is MVKNTVKHVDSSKHLEKVASLIKEGKVKKICVMVGAGISTAAGIPDFRSPETGIYNNLQRFNLPYAEAVFDLSYFRKNPRPFYELAHELMPEKYRPTYTHYFIRLLHDKRLLQKCYTQNIDTLERLAGVPDKALIEAHGSFQYSRCIECYEMAETEYVRACIMQKQVPKCNSCKGLIKPMIVFYGEGLPMRFFEHMEKDTKVCDMALVIGTSLLVHPFADLPEIVPNKCQRVLINREPAGDFGERKKDIMILGDCDSQVRALCKLLGWSDELEKLIDTSVETLTEEISLLSVDSTIEKNASEQKKDDNSVNPFTKIEEKKKDEVTLLVSDDE.

A Deacetylase sirtuin-type domain is found at 7-269 (KHVDSSKHLE…RALCKLLGWS (263 aa)). NAD(+)-binding positions include 35 to 55 (GAGI…TGIY) and 118 to 121 (QNID). His-138 serves as the catalytic Proton acceptor. Residues Cys-146, Cys-149, Cys-170, and Cys-173 each coordinate Zn(2+). NAD(+) is bound by residues 210–212 (GTS), 235–237 (NRE), and Cys-255.

It belongs to the sirtuin family. Class I subfamily. Requires Zn(2+) as cofactor.

It localises to the cytoplasm. The protein localises to the nucleus. It carries out the reaction N(6)-acetyl-L-lysyl-[protein] + NAD(+) + H2O = 2''-O-acetyl-ADP-D-ribose + nicotinamide + L-lysyl-[protein]. NAD-dependent histone deacetylase, which could function in telomeric silencing, cell cycle progression and chromosome stability. The protein is NAD-dependent protein deacetylase hst2 (hst2) of Schizosaccharomyces pombe (strain 972 / ATCC 24843) (Fission yeast).